The primary structure comprises 214 residues: Large ribosomal subunit protein uL3 (214 aa).

The interval 134–161 is disordered; sequence THGNSLSHRAPGSIGQCQTPGRVMKGKK. Position 151 is an N5-methylglutamine (glutamine 151).

It belongs to the universal ribosomal protein uL3 family. As to quaternary structure, part of the 50S ribosomal subunit. Forms a cluster with proteins L14 and L19. In terms of processing, methylated by PrmB.

Its function is as follows. One of the primary rRNA binding proteins, it binds directly near the 3'-end of the 23S rRNA, where it nucleates assembly of the 50S subunit. The sequence is that of Large ribosomal subunit protein uL3 from Teredinibacter turnerae (strain ATCC 39867 / T7901).